A 100-amino-acid polypeptide reads, in one-letter code: Guanine nucleotide-binding protein subunit gamma 2 (100 aa).

Met-1 is subject to N-acetylmethionine. A coiled-coil region spans residues 19–55 (TRGKHRIQAELKRLEQEARFLEEELEQLEKMDNASAS). The region spanning 21 to 100 (GKHRIQAELK…EAKRCGCSIL (80 aa)) is the G protein gamma domain. Positions 90–96 (KEAKRCG) are regulates lipidation and cell membrane subcellular localization. The S-palmitoyl cysteine moiety is linked to residue Cys-95. Cys-97 carries the post-translational modification Cysteine methyl ester. Cys-97 is lipidated: S-farnesyl cysteine. Positions 98–100 (SIL) are cleaved as a propeptide — removed in mature form.

In terms of assembly, g proteins are composed of 3 units, alpha, beta and gamma. GPG1 interacts with the beta subunit GB1. The dimer GB1-GG2 interacts with NDL1, NDL2 and NDL3. Binds to NUDT7. Mostly expressed in roots (excluded from the stele), seedlings (especially at the hypocotyl/root junction), floral stems, floral buds, flowers and siliques, and, to a lower extent, in leaves (restricted to guard cells). Also present in hydathods.

The protein localises to the cell membrane. Guanine nucleotide-binding proteins (G proteins) are involved as a modulator or transducer in various transmembrane signaling systems. The beta and gamma chains are required for the GTPase activity, for replacement of GDP by GTP, and for G protein-effector interaction. Involved in the abscisic acid (ABA) and ethylene signaling pathways. Regulates basipetal transport of auxin (IAA) in roots and hypocotyls, and thus modulates root architecture (e.g. lateral root formation). The heterotrimeric G-protein controls defense responses to necrotrophic and vascular fungi probably by modulating cell wall-related genes expression; involved in resistance to Plectosphaerella cucumerina. This Arabidopsis thaliana (Mouse-ear cress) protein is Guanine nucleotide-binding protein subunit gamma 2 (GG2).